Reading from the N-terminus, the 217-residue chain is Thiamine-phosphate synthase (217 aa).

4-amino-2-methyl-5-(diphosphooxymethyl)pyrimidine-binding positions include 45–49 and Asn81; that span reads QFRQK. Positions 82 and 101 each coordinate Mg(2+). Ser120 provides a ligand contact to 4-amino-2-methyl-5-(diphosphooxymethyl)pyrimidine. 147–149 is a 2-[(2R,5Z)-2-carboxy-4-methylthiazol-5(2H)-ylidene]ethyl phosphate binding site; the sequence is TPS. Lys150 is a 4-amino-2-methyl-5-(diphosphooxymethyl)pyrimidine binding site. 2-[(2R,5Z)-2-carboxy-4-methylthiazol-5(2H)-ylidene]ethyl phosphate contacts are provided by residues Gly179 and 197–198; that span reads IS.

The protein belongs to the thiamine-phosphate synthase family. Requires Mg(2+) as cofactor.

It catalyses the reaction 2-[(2R,5Z)-2-carboxy-4-methylthiazol-5(2H)-ylidene]ethyl phosphate + 4-amino-2-methyl-5-(diphosphooxymethyl)pyrimidine + 2 H(+) = thiamine phosphate + CO2 + diphosphate. The enzyme catalyses 2-(2-carboxy-4-methylthiazol-5-yl)ethyl phosphate + 4-amino-2-methyl-5-(diphosphooxymethyl)pyrimidine + 2 H(+) = thiamine phosphate + CO2 + diphosphate. The catalysed reaction is 4-methyl-5-(2-phosphooxyethyl)-thiazole + 4-amino-2-methyl-5-(diphosphooxymethyl)pyrimidine + H(+) = thiamine phosphate + diphosphate. Its pathway is cofactor biosynthesis; thiamine diphosphate biosynthesis; thiamine phosphate from 4-amino-2-methyl-5-diphosphomethylpyrimidine and 4-methyl-5-(2-phosphoethyl)-thiazole: step 1/1. Its function is as follows. Condenses 4-methyl-5-(beta-hydroxyethyl)thiazole monophosphate (THZ-P) and 2-methyl-4-amino-5-hydroxymethyl pyrimidine pyrophosphate (HMP-PP) to form thiamine monophosphate (TMP). The chain is Thiamine-phosphate synthase from Helicobacter pylori (strain J99 / ATCC 700824) (Campylobacter pylori J99).